Here is a 299-residue protein sequence, read N- to C-terminus: Regucalcin (299 aa).

Glutamate 18 lines the a divalent metal cation pocket. Substrate is bound by residues arginine 101, asparagine 103, and glutamate 121. Positions 154 and 204 each coordinate a divalent metal cation. Aspartate 204 functions as the Proton donor/acceptor in the catalytic mechanism. 2 positions are modified to N6-succinyllysine: lysine 244 and lysine 253.

This sequence belongs to the SMP-30/CGR1 family. In terms of assembly, monomer. Zn(2+) serves as cofactor. The cofactor is Mn(2+). Ca(2+) is required as a cofactor. Requires Mg(2+) as cofactor.

The protein localises to the cytoplasm. The enzyme catalyses D-glucono-1,5-lactone + H2O = D-gluconate + H(+). It functions in the pathway cofactor biosynthesis; L-ascorbate biosynthesis via UDP-alpha-D-glucuronate pathway; L-ascorbate from UDP-alpha-D-glucuronate: step 3/4. In terms of biological role, gluconolactonase with low activity towards other sugar lactones, including gulonolactone and galactonolactone. Catalyzes a key step in ascorbic acid (vitamin C) biosynthesis. Can also hydrolyze diisopropyl phosphorofluoridate and phenylacetate (in vitro). Calcium-binding protein. Modulates Ca(2+) signaling, and Ca(2+)-dependent cellular processes and enzyme activities. The chain is Regucalcin (RGN) from Bos taurus (Bovine).